Here is a 101-residue protein sequence, read N- to C-terminus: Small ribosomal subunit protein uS14 (101 aa).

The protein belongs to the universal ribosomal protein uS14 family. As to quaternary structure, part of the 30S ribosomal subunit. Contacts proteins S3 and S10.

Binds 16S rRNA, required for the assembly of 30S particles and may also be responsible for determining the conformation of the 16S rRNA at the A site. In Cupriavidus pinatubonensis (strain JMP 134 / LMG 1197) (Cupriavidus necator (strain JMP 134)), this protein is Small ribosomal subunit protein uS14.